Reading from the N-terminus, the 181-residue chain is Adenine phosphoribosyltransferase (181 aa).

Belongs to the purine/pyrimidine phosphoribosyltransferase family. As to quaternary structure, homodimer.

The protein localises to the cytoplasm. The enzyme catalyses AMP + diphosphate = 5-phospho-alpha-D-ribose 1-diphosphate + adenine. It participates in purine metabolism; AMP biosynthesis via salvage pathway; AMP from adenine: step 1/1. In terms of biological role, catalyzes a salvage reaction resulting in the formation of AMP, that is energically less costly than de novo synthesis. This Shewanella amazonensis (strain ATCC BAA-1098 / SB2B) protein is Adenine phosphoribosyltransferase.